The sequence spans 271 residues: Mediator of RNA polymerase II transcription subunit 18 (271 aa).

Positions 89–119 (FGGNPSSSGDPDVSMSGLEEKPSSSSSSYSY) are disordered.

This sequence belongs to the Mediator complex subunit 18 family. In terms of assembly, component of the Mediator complex.

The protein resides in the nucleus. Functionally, component of the Mediator complex, a coactivator involved in the regulated transcription of nearly all RNA polymerase II-dependent genes. Mediator functions as a bridge to convey information from gene-specific regulatory proteins to the basal RNA polymerase II transcription machinery. Mediator is recruited to promoters by direct interactions with regulatory proteins and serves as a scaffold for the assembly of a functional preinitiation complex with RNA polymerase II and the general transcription factors. This Aspergillus niger (strain ATCC MYA-4892 / CBS 513.88 / FGSC A1513) protein is Mediator of RNA polymerase II transcription subunit 18 (srb5).